Consider the following 323-residue polypeptide: MGQEKVTVSTRPLQWKCVESRADSKRLYYGRFLLAPLMRGQADTIGIAMRRALLGEIEGTCITRAKSEKIPHEYSTIVGIQESVHEILMNLKEIVLRSNLYGTRDASICVKGPGYVTAQDIILPPSVEIVDNTQHIANLTEPITLCIELQIERNRGYRIKTPNNFQNGSYPIDAVFMPVRNANHSIHSYVNGNENQEILFLEIWTNGSLTPKEALHEASRNLIDLFIPFFHAEEHLENNQHKGTLPLFNFHGRLAKPRKTKKEIALKYIYIDQSELPPRVYNCLKRSNINTFLELLNNSQEELMKIQDFRIEDVKHILDVLEI.

Positions 1 to 233 (MGQEKVTVST…DLFIPFFHAE (233 aa)) are alpha N-terminal domain (alpha-NTD). Residues 264 to 323 (IALKYIYIDQSELPPRVYNCLKRSNINTFLELLNNSQEELMKIQDFRIEDVKHILDVLEI) are alpha C-terminal domain (alpha-CTD).

Belongs to the RNA polymerase alpha chain family. In plastids the minimal PEP RNA polymerase catalytic core is composed of four subunits: alpha, beta, beta', and beta''. When a (nuclear-encoded) sigma factor is associated with the core the holoenzyme is formed, which can initiate transcription.

The protein localises to the plastid. It localises to the chloroplast. It catalyses the reaction RNA(n) + a ribonucleoside 5'-triphosphate = RNA(n+1) + diphosphate. Functionally, DNA-dependent RNA polymerase catalyzes the transcription of DNA into RNA using the four ribonucleoside triphosphates as substrates. The sequence is that of DNA-directed RNA polymerase subunit alpha from Morus indica (Mulberry).